A 75-amino-acid chain; its full sequence is Peptide Ctri10033 (75 aa).

Residues 1-22 form the signal peptide; the sequence is MNSKYLFVFLILIVTFTDLCQG. Arginine 43 carries the post-translational modification Arginine amide. Residues 47–75 constitute a propeptide that is removed on maturation; the sequence is ELGSQYDYLQDFRKRELDLDDLLSKFPDY.

It belongs to the non-disulfide-bridged peptide (NDBP) superfamily. Short antimicrobial peptide (group 4) family. In terms of tissue distribution, expressed by the venom gland.

The protein resides in the secreted. This Chaerilus tricostatus (Scorpion) protein is Peptide Ctri10033.